Reading from the N-terminus, the 430-residue chain is Dihydrolipoyllysine-residue acetyltransferase component of pyruvate dehydrogenase complex (430 aa).

The 76-residue stretch at 2–77 (AFEFRLPDIG…VVGDVIVKID (76 aa)) folds into the Lipoyl-binding domain. An N6-lipoyllysine modification is found at K43. The disordered stretch occupies residues 80–122 (DAEDMQFKGHDDDSSSKEEPAKEEAPAEQAPVATQTEEVDENR). Basic and acidic residues predominate over residues 84–104 (MQFKGHDDDSSSKEEPAKEEA). The Peripheral subunit-binding (PSBD) domain occupies 125–162 (KAMPSVRKYAREKGVNIKAVSGSGKNGRITKEDVDAYL). Positions 165-200 (GAPTASNESAASATSEEVAETPAAPAAVTLEGDFPE) are disordered. Positions 166–193 (APTASNESAASATSEEVAETPAAPAAVT) are enriched in low complexity. H401 is an active-site residue.

The protein belongs to the 2-oxoacid dehydrogenase family. In terms of assembly, forms a 24-polypeptide structural core with octahedral symmetry. (R)-lipoate is required as a cofactor.

It carries out the reaction N(6)-[(R)-dihydrolipoyl]-L-lysyl-[protein] + acetyl-CoA = N(6)-[(R)-S(8)-acetyldihydrolipoyl]-L-lysyl-[protein] + CoA. In terms of biological role, the pyruvate dehydrogenase complex catalyzes the overall conversion of pyruvate to acetyl-CoA and CO(2). It contains multiple copies of three enzymatic components: pyruvate dehydrogenase (E1), dihydrolipoamide acetyltransferase (E2) and lipoamide dehydrogenase (E3). This chain is Dihydrolipoyllysine-residue acetyltransferase component of pyruvate dehydrogenase complex (pdhC), found in Staphylococcus aureus (strain COL).